We begin with the raw amino-acid sequence, 372 residues long: Probable E3 ubiquitin-protein ligase makorin-1 (372 aa).

C3H1-type zinc fingers lie at residues 20–45 (KHVT…HDLT) and 48–75 (KPAA…HCKP). The interval 78–110 (NEEFSSPQMLPPSSPSPSTDPESSQPAPRPKTQ) is disordered. The segment covering 93–103 (SPSTDPESSQP) has biased composition (low complexity). The segment at 153–180 (ALRKQLCPYAAVGECRYGINCAYLHGDV) adopts a C3H1-type 3 zinc-finger fold. The makorin-type Cys-His stretch occupies residues 181–208 (CDMCGLQVLHPTDNSQRSQHTKACIEAH). The segment at 226–280 (CGVCMEVVFEKANPSERRFGILSNCNHCYCLKCIRKWRSAKQFESKIIKSCPECR) adopts an RING-type zinc-finger fold. The C3H1-type 4 zinc finger occupies 309-338 (GMGRKPCRYFDEGRGICPFGANCFYKHAFP).

The catalysed reaction is S-ubiquitinyl-[E2 ubiquitin-conjugating enzyme]-L-cysteine + [acceptor protein]-L-lysine = [E2 ubiquitin-conjugating enzyme]-L-cysteine + N(6)-ubiquitinyl-[acceptor protein]-L-lysine.. Its pathway is protein modification; protein ubiquitination. Functionally, E3 ubiquitin ligase catalyzing the covalent attachment of ubiquitin moieties onto substrate proteins. In Tetraodon nigroviridis (Spotted green pufferfish), this protein is Probable E3 ubiquitin-protein ligase makorin-1.